The sequence spans 370 residues: Lipoyl synthase, mitochondrial (370 aa).

Cysteine 100, cysteine 105, cysteine 111, cysteine 131, cysteine 135, cysteine 138, and serine 346 together coordinate [4Fe-4S] cluster. Residues 116 to 335 enclose the Radical SAM core domain; sequence DKSRATATIM…KEVAEKLGFL (220 aa).

It belongs to the radical SAM superfamily. Lipoyl synthase family. It depends on [4Fe-4S] cluster as a cofactor.

The protein localises to the mitochondrion. It carries out the reaction [[Fe-S] cluster scaffold protein carrying a second [4Fe-4S](2+) cluster] + N(6)-octanoyl-L-lysyl-[protein] + 2 oxidized [2Fe-2S]-[ferredoxin] + 2 S-adenosyl-L-methionine + 4 H(+) = [[Fe-S] cluster scaffold protein] + N(6)-[(R)-dihydrolipoyl]-L-lysyl-[protein] + 4 Fe(3+) + 2 hydrogen sulfide + 2 5'-deoxyadenosine + 2 L-methionine + 2 reduced [2Fe-2S]-[ferredoxin]. It participates in protein modification; protein lipoylation via endogenous pathway; protein N(6)-(lipoyl)lysine from octanoyl-[acyl-carrier-protein]: step 2/2. In terms of biological role, catalyzes the radical-mediated insertion of two sulfur atoms into the C-6 and C-8 positions of the octanoyl moiety bound to the lipoyl domains of lipoate-dependent enzymes, thereby converting the octanoylated domains into lipoylated derivatives. This chain is Lipoyl synthase, mitochondrial (lip5), found in Schizosaccharomyces pombe (strain 972 / ATCC 24843) (Fission yeast).